The primary structure comprises 156 residues: Small ribosomal subunit protein uS7 (156 aa).

This sequence belongs to the universal ribosomal protein uS7 family. As to quaternary structure, part of the 30S ribosomal subunit. Contacts proteins S9 and S11.

One of the primary rRNA binding proteins, it binds directly to 16S rRNA where it nucleates assembly of the head domain of the 30S subunit. Is located at the subunit interface close to the decoding center, probably blocks exit of the E-site tRNA. The sequence is that of Small ribosomal subunit protein uS7 from Rhodobacter capsulatus (Rhodopseudomonas capsulata).